Consider the following 686-residue polypeptide: Methionine--tRNA ligase (686 aa).

Positions 15–25 match the 'HIGH' region motif; sequence PYANGSIHLGH. The Zn(2+) site is built by Cys146, Cys149, Cys159, and Cys162. The 'KMSKS' region motif lies at 332–336; that stretch reads KMSKS. An ATP-binding site is contributed by Lys335. The tRNA-binding domain occupies 585–686; the sequence is AFEAVDMRIA…EGAQPGMRVM (102 aa).

This sequence belongs to the class-I aminoacyl-tRNA synthetase family. MetG type 1 subfamily. In terms of assembly, homodimer. It depends on Zn(2+) as a cofactor.

The protein resides in the cytoplasm. It catalyses the reaction tRNA(Met) + L-methionine + ATP = L-methionyl-tRNA(Met) + AMP + diphosphate. In terms of biological role, is required not only for elongation of protein synthesis but also for the initiation of all mRNA translation through initiator tRNA(fMet) aminoacylation. This Aliivibrio fischeri (strain MJ11) (Vibrio fischeri) protein is Methionine--tRNA ligase.